Consider the following 40-residue polypeptide: Photosystem II reaction center protein J (40 aa).

Residues 8 to 28 (IPLWVIGTVAGILVIGLIGIF) form a helical membrane-spanning segment.

It belongs to the PsbJ family. In terms of assembly, PSII is composed of 1 copy each of membrane proteins PsbA, PsbB, PsbC, PsbD, PsbE, PsbF, PsbH, PsbI, PsbJ, PsbK, PsbL, PsbM, PsbT, PsbX, PsbY, PsbZ, Psb30/Ycf12, at least 3 peripheral proteins of the oxygen-evolving complex and a large number of cofactors. It forms dimeric complexes.

The protein localises to the plastid. It localises to the chloroplast thylakoid membrane. In terms of biological role, one of the components of the core complex of photosystem II (PSII). PSII is a light-driven water:plastoquinone oxidoreductase that uses light energy to abstract electrons from H(2)O, generating O(2) and a proton gradient subsequently used for ATP formation. It consists of a core antenna complex that captures photons, and an electron transfer chain that converts photonic excitation into a charge separation. This Lepidium virginicum (Virginia pepperweed) protein is Photosystem II reaction center protein J.